A 96-amino-acid polypeptide reads, in one-letter code: Co-chaperonin GroES (96 aa).

The protein belongs to the GroES chaperonin family. As to quaternary structure, heptamer of 7 subunits arranged in a ring. Interacts with the chaperonin GroEL.

The protein resides in the cytoplasm. Together with the chaperonin GroEL, plays an essential role in assisting protein folding. The GroEL-GroES system forms a nano-cage that allows encapsulation of the non-native substrate proteins and provides a physical environment optimized to promote and accelerate protein folding. GroES binds to the apical surface of the GroEL ring, thereby capping the opening of the GroEL channel. This chain is Co-chaperonin GroES, found in Trichlorobacter lovleyi (strain ATCC BAA-1151 / DSM 17278 / SZ) (Geobacter lovleyi).